Reading from the N-terminus, the 143-residue chain is Large ribosomal subunit protein uL13 (143 aa).

It belongs to the universal ribosomal protein uL13 family. As to quaternary structure, part of the 50S ribosomal subunit.

In terms of biological role, this protein is one of the early assembly proteins of the 50S ribosomal subunit, although it is not seen to bind rRNA by itself. It is important during the early stages of 50S assembly. The chain is Large ribosomal subunit protein uL13 from Clostridioides difficile (strain 630) (Peptoclostridium difficile).